We begin with the raw amino-acid sequence, 556 residues long: Urocanate hydratase (556 aa).

NAD(+) contacts are provided by residues 52–53 (GG), Gln130, 176–178 (GMG), Glu196, Arg201, 242–243 (NA), 263–267 (QTSAH), 273–274 (YL), and Tyr322. Cys410 is an active-site residue. Residue Gly492 coordinates NAD(+).

Belongs to the urocanase family. NAD(+) serves as cofactor.

It localises to the cytoplasm. The enzyme catalyses 4-imidazolone-5-propanoate = trans-urocanate + H2O. Its pathway is amino-acid degradation; L-histidine degradation into L-glutamate; N-formimidoyl-L-glutamate from L-histidine: step 2/3. Its function is as follows. Catalyzes the conversion of urocanate to 4-imidazolone-5-propionate. The chain is Urocanate hydratase from Shewanella frigidimarina (strain NCIMB 400).